Reading from the N-terminus, the 455-residue chain is Exodeoxyribonuclease 7 large subunit (455 aa).

This sequence belongs to the XseA family. As to quaternary structure, heterooligomer composed of large and small subunits.

Its subcellular location is the cytoplasm. It carries out the reaction Exonucleolytic cleavage in either 5'- to 3'- or 3'- to 5'-direction to yield nucleoside 5'-phosphates.. Its function is as follows. Bidirectionally degrades single-stranded DNA into large acid-insoluble oligonucleotides, which are then degraded further into small acid-soluble oligonucleotides. The protein is Exodeoxyribonuclease 7 large subunit of Escherichia fergusonii (strain ATCC 35469 / DSM 13698 / CCUG 18766 / IAM 14443 / JCM 21226 / LMG 7866 / NBRC 102419 / NCTC 12128 / CDC 0568-73).